Consider the following 309-residue polypeptide: Formate-nitrite transporter (309 aa).

Residues 1 to 19 are Cytoplasmic-facing; sequence MPPNNSKYVLDPVSIKSVC. An intramembrane region (helical) is located at residues 20–35; that stretch reads GGEESYIRCVEYGKKK. Residues 36–40 lie on the Cytoplasmic side of the membrane; that stretch reads AHYSN. Residues 41-68 form a helical membrane-spanning segment; sequence LNLLAKAILAGMFVGLCAHASGIAGGLF. Residues 69–79 are Extracellular-facing; it reads YYHKLREIVGA. Residues 80–100 form a helical membrane-spanning segment; the sequence is SMSVFVYGFTFPIAFMCIICT. Residues 101 to 122 lie on the Cytoplasmic side of the membrane; that stretch reads GSDLFTGNTLAVTMALYEKKVK. A helical transmembrane segment spans residues 123-150; sequence LLDYLRVMTISLFGNYVGAVSFAFFVSY. Residues 151–163 lie on the Extracellular side of the membrane; the sequence is LSGAFTNVHAVEK. The helical intramembrane region spans 164–179; sequence NHFFQFLNDIAEKKVH. At 180–181 the chain is on the extracellular side; that stretch reads HT. The chain crosses the membrane as a helical span at residues 182–206; sequence FVECVSLAVGCNIFVCLAVYFVLTL. Topologically, residues 207 to 209 are cytoplasmic; sequence KDG. A helical membrane pass occupies residues 210-226; that stretch reads AGYVFSVFFAVYAFAIA. The Extracellular portion of the chain corresponds to 227–249; that stretch reads GYEHIIANIYTLNIALMVNTKIT. A helical membrane pass occupies residues 250 to 280; sequence VYQAYIKNLLPTLLGNYIAGAIVLGLPLYFI. The Cytoplasmic segment spans residues 281-309; the sequence is YKEHYYNFERSKRDNNDAQMKSLSIELRN.

This sequence belongs to the FNT transporter (TC 1.A.16) family. As to quaternary structure, homopentamer.

The protein resides in the cell membrane. The protein localises to the vacuole membrane. It catalyses the reaction (S)-lactate(in) + H(+)(in) = (S)-lactate(out) + H(+)(out). It carries out the reaction formate(in) + H(+)(in) = formate(out) + H(+)(out). The enzyme catalyses pyruvate(out) + H(+)(out) = pyruvate(in) + H(+)(in). The catalysed reaction is acetate(out) + H(+)(out) = acetate(in) + H(+)(in). Its activity is regulated as follows. Inhibited by diethylpyrocarbonate (DEPC). Protonophores, such as 2,4-dinitrophenol and carbonylcyanide-3-chlorophenylhydrazone, abolish transport. Inhibited by phloretin, furosemide, alpha-cyano-4-hydroxy-cinnamate and alpha-fluorocinnamate. Inhibited by the Malaria Box compound MMV007839 and its derivatives BH296 and BH267.meta. Inhibited by the Malaria Box compound MMV000972. Inhibited by broad-specificity anion transport inhibitor NPPB. Functionally, monocarboxylate-proton symporter that mediates the efflux of the waste product lactate in the intraerythrocytic parasites; active in acidic-to-neutral pH range. Transports L-lactate. Transports D-lactate, pyruvate, acetate and formate. Essential for asexual growth but dispensable for the development of gametocytes. The protein is Formate-nitrite transporter of Plasmodium falciparum (isolate 3D7).